Here is a 398-residue protein sequence, read N- to C-terminus: Dual-specificity RNA methyltransferase RlmN (398 aa).

Catalysis depends on Glu121, which acts as the Proton acceptor. The Radical SAM core domain maps to 127–370 (ETDRGTLCVS…VRTPRGRDIL (244 aa)). A disulfide bond links Cys134 and Cys373. [4Fe-4S] cluster contacts are provided by Cys141, Cys145, and Cys148. S-adenosyl-L-methionine-binding positions include 199-200 (GE), Ser231, 253-255 (SLH), and Asn330. Cys373 (S-methylcysteine intermediate) is an active-site residue.

It belongs to the radical SAM superfamily. RlmN family. It depends on [4Fe-4S] cluster as a cofactor.

It is found in the cytoplasm. The catalysed reaction is adenosine(2503) in 23S rRNA + 2 reduced [2Fe-2S]-[ferredoxin] + 2 S-adenosyl-L-methionine = 2-methyladenosine(2503) in 23S rRNA + 5'-deoxyadenosine + L-methionine + 2 oxidized [2Fe-2S]-[ferredoxin] + S-adenosyl-L-homocysteine. It catalyses the reaction adenosine(37) in tRNA + 2 reduced [2Fe-2S]-[ferredoxin] + 2 S-adenosyl-L-methionine = 2-methyladenosine(37) in tRNA + 5'-deoxyadenosine + L-methionine + 2 oxidized [2Fe-2S]-[ferredoxin] + S-adenosyl-L-homocysteine. In terms of biological role, specifically methylates position 2 of adenine 2503 in 23S rRNA and position 2 of adenine 37 in tRNAs. m2A2503 modification seems to play a crucial role in the proofreading step occurring at the peptidyl transferase center and thus would serve to optimize ribosomal fidelity. This Rhodopseudomonas palustris (strain BisB5) protein is Dual-specificity RNA methyltransferase RlmN.